Here is a 437-residue protein sequence, read N- to C-terminus: tRNA pseudouridine synthase Pus10 (437 aa).

A THUMP domain is found at valine 76–serine 198. Aspartate 253 functions as the Nucleophile in the catalytic mechanism. Substrate-binding residues include tyrosine 321 and tyrosine 394.

This sequence belongs to the pseudouridine synthase Pus10 family.

The catalysed reaction is uridine(54) in tRNA = pseudouridine(54) in tRNA. It catalyses the reaction uridine(55) in tRNA = pseudouridine(55) in tRNA. In terms of biological role, responsible for synthesis of pseudouridine from uracil-54 and uracil-55 in the psi GC loop of transfer RNAs. This Aeropyrum pernix (strain ATCC 700893 / DSM 11879 / JCM 9820 / NBRC 100138 / K1) protein is tRNA pseudouridine synthase Pus10.